The sequence spans 551 residues: Probable 4-coumarate--CoA ligase 3 (551 aa).

6 residues coordinate ATP: serine 205, serine 206, glycine 207, threonine 208, threonine 209, and lysine 213. Position 253 (phenylalanine 253) interacts with (E)-4-coumaroyl-AMP. Lysine 274 lines the CoA pocket. The segment at 276–346 (EPVRFLELIK…RFKGRLVIKQ (71 aa)) is SBD1. (E)-4-coumaroyl-AMP is bound by residues alanine 323, glutamine 346, glycine 347, and threonine 351. Residues glutamine 346, glycine 347, threonine 351, aspartate 430, and arginine 445 each coordinate ATP. Positions 347 to 409 (GYGATELSPC…IKGPNVMLGY (63 aa)) are SBD2. Positions 447 and 451 each coordinate (E)-4-coumaroyl-AMP. CoA-binding residues include lysine 453 and glycine 454. Lysine 537 contacts ATP.

It belongs to the ATP-dependent AMP-binding enzyme family. Requires Mg(2+) as cofactor.

It catalyses the reaction (E)-4-coumarate + ATP + CoA = (E)-4-coumaroyl-CoA + AMP + diphosphate. It carries out the reaction (E)-4-coumarate + ATP + H(+) = (E)-4-coumaroyl-AMP + diphosphate. The enzyme catalyses (E)-4-coumaroyl-AMP + CoA = (E)-4-coumaroyl-CoA + AMP + H(+). It participates in phytoalexin biosynthesis; 3,4',5-trihydroxystilbene biosynthesis; 3,4',5-trihydroxystilbene from trans-4-coumarate: step 1/2. In terms of biological role, carboxylate--CoA ligase that may use 4-coumarate as substrate. Follows a two-step reaction mechanism, wherein the carboxylate substrate first undergoes adenylation by ATP, followed by a thioesterification in the presence of CoA to yield the final CoA thioester. In Dictyostelium discoideum (Social amoeba), this protein is Probable 4-coumarate--CoA ligase 3 (4cl3).